Here is a 276-residue protein sequence, read N- to C-terminus: NH(3)-dependent NAD(+) synthetase (276 aa).

43 to 50 (GISGGVDS) lines the ATP pocket. A Mg(2+)-binding site is contributed by Asp49. Arg146 contributes to the deamido-NAD(+) binding site. Thr166 serves as a coordination point for ATP. Glu171 serves as a coordination point for Mg(2+). Deamido-NAD(+) contacts are provided by Lys179 and Asp186. Positions 195 and 217 each coordinate ATP. Deamido-NAD(+) is bound at residue 266-267 (HK).

It belongs to the NAD synthetase family. As to quaternary structure, homodimer.

It carries out the reaction deamido-NAD(+) + NH4(+) + ATP = AMP + diphosphate + NAD(+) + H(+). The protein operates within cofactor biosynthesis; NAD(+) biosynthesis; NAD(+) from deamido-NAD(+) (ammonia route): step 1/1. Functionally, catalyzes the ATP-dependent amidation of deamido-NAD to form NAD. Uses ammonia as a nitrogen source. The chain is NH(3)-dependent NAD(+) synthetase from Psychromonas ingrahamii (strain DSM 17664 / CCUG 51855 / 37).